Consider the following 323-residue polypeptide: tRNA U34 carboxymethyltransferase (323 aa).

Residues K91, W105, K110, G130, 152–154, 181–182, M196, Y200, and R315 each bind carboxy-S-adenosyl-L-methionine; these read DPT and IE.

The protein belongs to the class I-like SAM-binding methyltransferase superfamily. CmoB family. In terms of assembly, homotetramer.

The enzyme catalyses carboxy-S-adenosyl-L-methionine + 5-hydroxyuridine(34) in tRNA = 5-carboxymethoxyuridine(34) in tRNA + S-adenosyl-L-homocysteine + H(+). Functionally, catalyzes carboxymethyl transfer from carboxy-S-adenosyl-L-methionine (Cx-SAM) to 5-hydroxyuridine (ho5U) to form 5-carboxymethoxyuridine (cmo5U) at position 34 in tRNAs. This is tRNA U34 carboxymethyltransferase from Escherichia coli O139:H28 (strain E24377A / ETEC).